The chain runs to 855 residues: DNA mismatch repair protein MutS (855 aa).

617–624 is a binding site for ATP; sequence GPNMGGKS.

It belongs to the DNA mismatch repair MutS family.

Its function is as follows. This protein is involved in the repair of mismatches in DNA. It is possible that it carries out the mismatch recognition step. This protein has a weak ATPase activity. In Baumannia cicadellinicola subsp. Homalodisca coagulata, this protein is DNA mismatch repair protein MutS.